A 279-amino-acid chain; its full sequence is Tryptophan synthase alpha chain (279 aa).

Catalysis depends on proton acceptor residues Glu50 and Asp61.

The protein belongs to the TrpA family. In terms of assembly, tetramer of two alpha and two beta chains.

The catalysed reaction is (1S,2R)-1-C-(indol-3-yl)glycerol 3-phosphate + L-serine = D-glyceraldehyde 3-phosphate + L-tryptophan + H2O. It participates in amino-acid biosynthesis; L-tryptophan biosynthesis; L-tryptophan from chorismate: step 5/5. The alpha subunit is responsible for the aldol cleavage of indoleglycerol phosphate to indole and glyceraldehyde 3-phosphate. The protein is Tryptophan synthase alpha chain of Azorhizobium caulinodans (strain ATCC 43989 / DSM 5975 / JCM 20966 / LMG 6465 / NBRC 14845 / NCIMB 13405 / ORS 571).